Reading from the N-terminus, the 248-residue chain is PF03932 family protein CutC (248 aa).

Belongs to the CutC family. In terms of assembly, homodimer.

The protein resides in the cytoplasm. This Salmonella enteritidis PT4 (strain P125109) protein is PF03932 family protein CutC.